The sequence spans 209 residues: Uracil phosphoribosyltransferase (209 aa).

5-phospho-alpha-D-ribose 1-diphosphate contacts are provided by residues R79, R104, and 131–139 (DPMLATGGS). Uracil contacts are provided by residues I194 and 199–201 (GDA). D200 contributes to the 5-phospho-alpha-D-ribose 1-diphosphate binding site.

Belongs to the UPRTase family. It depends on Mg(2+) as a cofactor.

It catalyses the reaction UMP + diphosphate = 5-phospho-alpha-D-ribose 1-diphosphate + uracil. It participates in pyrimidine metabolism; UMP biosynthesis via salvage pathway; UMP from uracil: step 1/1. Its activity is regulated as follows. Allosterically activated by GTP. Catalyzes the conversion of uracil and 5-phospho-alpha-D-ribose 1-diphosphate (PRPP) to UMP and diphosphate. This chain is Uracil phosphoribosyltransferase, found in Streptococcus mutans serotype c (strain ATCC 700610 / UA159).